We begin with the raw amino-acid sequence, 833 residues long: Protein translocase subunit SecA (833 aa).

Residues glutamine 87, 105–109 (GEGKT), and aspartate 494 each bind ATP. The tract at residues 789 to 816 (PAAVAYSGGEAEAGPAQPHREDPKVGRN) is disordered. Residues 806 to 815 (PHREDPKVGR) are compositionally biased toward basic and acidic residues. Zn(2+) is bound by residues cysteine 819, cysteine 821, cysteine 830, and cysteine 831.

The protein belongs to the SecA family. Monomer and homodimer. Part of the essential Sec protein translocation apparatus which comprises SecA, SecYEG and auxiliary proteins SecDF-YajC and YidC. Zn(2+) is required as a cofactor.

It localises to the cell inner membrane. The protein resides in the cytoplasm. The enzyme catalyses ATP + H2O + cellular proteinSide 1 = ADP + phosphate + cellular proteinSide 2.. Part of the Sec protein translocase complex. Interacts with the SecYEG preprotein conducting channel. Has a central role in coupling the hydrolysis of ATP to the transfer of proteins into and across the cell membrane, serving as an ATP-driven molecular motor driving the stepwise translocation of polypeptide chains across the membrane. The chain is Protein translocase subunit SecA from Nitratidesulfovibrio vulgaris (strain DP4) (Desulfovibrio vulgaris).